The sequence spans 464 residues: UNC93-like protein 3 (464 aa).

Helical transmembrane passes span 31 to 51 (VHIL…AQNL), 62 to 82 (ISLG…SLVV), 84 to 104 (LMGS…FVAA), 110 to 130 (WFTM…IWVG), 160 to 180 (EFWA…LALL), 192 to 212 (TLLM…MFFI), 251 to 271 (LLIV…WAEF), 275 to 295 (IVTP…YGAL), 313 to 333 (ITFI…WLLL), 341 to 361 (VLGT…DGIL), and 392 to 412 (IAIV…IVML).

Belongs to the unc-93 family.

Its subcellular location is the membrane. The sequence is that of UNC93-like protein 3 from Arabidopsis thaliana (Mouse-ear cress).